A 295-amino-acid chain; its full sequence is Aspartate carbamoyltransferase catalytic subunit (295 aa).

The carbamoyl phosphate site is built by R49 and T50. Residue K77 coordinates L-aspartate. Residues R99, H127, and Q130 each coordinate carbamoyl phosphate. Positions 161 and 212 each coordinate L-aspartate. Carbamoyl phosphate-binding residues include G251 and P252.

Belongs to the aspartate/ornithine carbamoyltransferase superfamily. ATCase family. Heterododecamer (2C3:3R2) of six catalytic PyrB chains organized as two trimers (C3), and six regulatory PyrI chains organized as three dimers (R2).

It catalyses the reaction carbamoyl phosphate + L-aspartate = N-carbamoyl-L-aspartate + phosphate + H(+). It functions in the pathway pyrimidine metabolism; UMP biosynthesis via de novo pathway; (S)-dihydroorotate from bicarbonate: step 2/3. In terms of biological role, catalyzes the condensation of carbamoyl phosphate and aspartate to form carbamoyl aspartate and inorganic phosphate, the committed step in the de novo pyrimidine nucleotide biosynthesis pathway. This is Aspartate carbamoyltransferase catalytic subunit from Campylobacter jejuni subsp. jejuni serotype O:2 (strain ATCC 700819 / NCTC 11168).